The chain runs to 160 residues: SsrA-binding protein (160 aa).

Residues 134–160 form a disordered region; that stretch reads YDKRDTERERDSNRELHRAVRNKGKED.

This sequence belongs to the SmpB family.

It localises to the cytoplasm. Its function is as follows. Required for rescue of stalled ribosomes mediated by trans-translation. Binds to transfer-messenger RNA (tmRNA), required for stable association of tmRNA with ribosomes. tmRNA and SmpB together mimic tRNA shape, replacing the anticodon stem-loop with SmpB. tmRNA is encoded by the ssrA gene; the 2 termini fold to resemble tRNA(Ala) and it encodes a 'tag peptide', a short internal open reading frame. During trans-translation Ala-aminoacylated tmRNA acts like a tRNA, entering the A-site of stalled ribosomes, displacing the stalled mRNA. The ribosome then switches to translate the ORF on the tmRNA; the nascent peptide is terminated with the 'tag peptide' encoded by the tmRNA and targeted for degradation. The ribosome is freed to recommence translation, which seems to be the essential function of trans-translation. This chain is SsrA-binding protein, found in Pseudomonas fluorescens (strain SBW25).